The chain runs to 440 residues: Zinc finger MYND domain-containing protein 10 (440 aa).

Cysteine 394, cysteine 397, cysteine 405, cysteine 408, cysteine 414, cysteine 418, histidine 426, and cysteine 430 together coordinate Zn(2+). An MYND-type zinc finger spans residues 394–430; it reads CGYCNAEASKRCSRCQNVWYCCRECQVKHWEKHGKTC.

Belongs to the ZMYND10 family. Interacts (via C-terminus) with DNAAF11 (via CS domain); this interaction stabilizes DNAAF11 at the protein level. Interacts (via C-terminus) with DNAL1; this interaction stabilizes DNAL1 at the protein level. Interacts with DNAAF4, HSPA8, IQUB, RUVBL2 and DYNTL5. As to expression, expressed in the testis. Expressed in the tracheal epithelium. Restricted to regions containing motile cilia.

Its subcellular location is the cytoplasm. It is found in the cytoskeleton. It localises to the microtubule organizing center. The protein resides in the centrosome. The protein localises to the centriolar satellite. Its subcellular location is the apical cell membrane. It is found in the dynein axonemal particle. In terms of biological role, plays a role in axonemal structure organization and motility. Involved in axonemal pre-assembly of inner and outer dynein arms (IDA and ODA, respectively) for proper axoneme building for cilia motility. May act by indirectly regulating transcription of dynein proteins. This chain is Zinc finger MYND domain-containing protein 10 (Zmynd10), found in Mus musculus (Mouse).